Reading from the N-terminus, the 242-residue chain is Endoglucanase-5 (242 aa).

Positions Met1 to Ala17 are cleaved as a signal peptide. A catalytic region spans residues Tyr18–Asn182. Asp27 functions as the Nucleophile in the catalytic mechanism. Residue Asp134 is the Proton donor of the active site. Residues Thr177–Gln206 are disordered. N-linked (GlcNAc...) asparagine glycosylation occurs at Asn182. Residues Thr184 to Pro201 are compositionally biased toward low complexity. The region spanning Gly205–Leu241 is the CBM1 domain. 2 disulfides stabilise this stretch: Cys213/Cys230 and Cys224/Cys240.

This sequence belongs to the glycosyl hydrolase 45 (cellulase K) family.

The catalysed reaction is Endohydrolysis of (1-&gt;4)-beta-D-glucosidic linkages in cellulose, lichenin and cereal beta-D-glucans.. The sequence is that of Endoglucanase-5 (egl5) from Hypocrea jecorina (Trichoderma reesei).